The primary structure comprises 334 residues: Fructose-1,6-bisphosphatase class 1 (334 aa).

The Mg(2+) site is built by Glu91, Asp113, Leu115, and Asp116. Residues 116 to 119 (DGSS), Asn208, and Lys274 each bind substrate. Residue Glu280 participates in Mg(2+) binding.

This sequence belongs to the FBPase class 1 family. Homotetramer. Mg(2+) is required as a cofactor.

Its subcellular location is the cytoplasm. It catalyses the reaction beta-D-fructose 1,6-bisphosphate + H2O = beta-D-fructose 6-phosphate + phosphate. Its pathway is carbohydrate biosynthesis; gluconeogenesis. This Janthinobacterium sp. (strain Marseille) (Minibacterium massiliensis) protein is Fructose-1,6-bisphosphatase class 1.